The following is an 81-amino-acid chain: Cell division protein ZapB (81 aa).

Residues 5–81 are a coiled coil; it reads LEVFEKLESK…QALLGRMEEV (77 aa). Residues 43–64 form a disordered region; it reads VHSAQNGREELERENQQLREQQ. Basic and acidic residues predominate over residues 49-59; the sequence is GREELERENQQ.

This sequence belongs to the ZapB family. As to quaternary structure, homodimer. The ends of the coiled-coil dimer bind to each other, forming polymers. Interacts with FtsZ.

The protein localises to the cytoplasm. In terms of biological role, non-essential, abundant cell division factor that is required for proper Z-ring formation. It is recruited early to the divisome by direct interaction with FtsZ, stimulating Z-ring assembly and thereby promoting cell division earlier in the cell cycle. Its recruitment to the Z-ring requires functional FtsA or ZipA. This chain is Cell division protein ZapB, found in Enterobacter sp. (strain 638).